The primary structure comprises 466 residues: Glutamyl-tRNA reductase (466 aa).

Substrate contacts are provided by residues 47 to 50 (TCNR), S107, 112 to 114 (EQQ), and Q118. The Nucleophile role is filled by C48. 194 to 199 (GAGAMS) is a binding site for NADP(+).

Belongs to the glutamyl-tRNA reductase family. As to quaternary structure, homodimer.

It carries out the reaction (S)-4-amino-5-oxopentanoate + tRNA(Glu) + NADP(+) = L-glutamyl-tRNA(Glu) + NADPH + H(+). It participates in porphyrin-containing compound metabolism; protoporphyrin-IX biosynthesis; 5-aminolevulinate from L-glutamyl-tRNA(Glu): step 1/2. Its function is as follows. Catalyzes the NADPH-dependent reduction of glutamyl-tRNA(Glu) to glutamate 1-semialdehyde (GSA). This Corynebacterium efficiens (strain DSM 44549 / YS-314 / AJ 12310 / JCM 11189 / NBRC 100395) protein is Glutamyl-tRNA reductase.